Here is a 200-residue protein sequence, read N- to C-terminus: Large ribosomal subunit protein bL25 (200 aa).

It belongs to the bacterial ribosomal protein bL25 family. CTC subfamily. Part of the 50S ribosomal subunit; part of the 5S rRNA/L5/L18/L25 subcomplex. Contacts the 5S rRNA. Binds to the 5S rRNA independently of L5 and L18.

Functionally, this is one of the proteins that binds to the 5S RNA in the ribosome where it forms part of the central protuberance. This Pseudomonas fluorescens (strain SBW25) protein is Large ribosomal subunit protein bL25.